The following is a 464-amino-acid chain: Probable mannosyltransferase KTR4 (464 aa).

The Cytoplasmic segment spans residues 1–11; it reads MRFLSKRILKP. Residues 12 to 32 form a helical; Signal-anchor for type II membrane protein membrane-spanning segment; the sequence is VLSVIILISIAVTVVLYFLTA. Positions 33 to 130 are stem region; sequence NENYLQAVKD…NLVRSGDPLA (98 aa). The Lumenal portion of the chain corresponds to 33–464; the sequence is NENYLQAVKD…SMSEEELEMY (432 aa). Positions 131–464 are catalytic; that stretch reads GKAKGTILSL…SMSEEELEMY (334 aa). E352 (nucleophile) is an active-site residue.

Belongs to the glycosyltransferase 15 family.

The protein localises to the membrane. Its function is as follows. Possible glycosyltransferase that transfers an alpha-D-mannosyl residue from GDP-mannose into lipid-linked oligosaccharide, forming an alpha-(1-&gt;2)-D-mannosyl-D-mannose linkage. This chain is Probable mannosyltransferase KTR4 (KTR4), found in Saccharomyces cerevisiae (strain ATCC 204508 / S288c) (Baker's yeast).